The chain runs to 316 residues: Biotin synthase (316 aa).

The 225-residue stretch at 36 to 260 (NKIQISMLLN…LMPKSYIRLA (225 aa)) folds into the Radical SAM core domain. 3 residues coordinate [4Fe-4S] cluster: C51, C55, and C58. The [2Fe-2S] cluster site is built by C95, C126, C186, and R258.

Belongs to the radical SAM superfamily. Biotin synthase family. Homodimer. Requires [4Fe-4S] cluster as cofactor. The cofactor is [2Fe-2S] cluster.

The catalysed reaction is (4R,5S)-dethiobiotin + (sulfur carrier)-SH + 2 reduced [2Fe-2S]-[ferredoxin] + 2 S-adenosyl-L-methionine = (sulfur carrier)-H + biotin + 2 5'-deoxyadenosine + 2 L-methionine + 2 oxidized [2Fe-2S]-[ferredoxin]. It functions in the pathway cofactor biosynthesis; biotin biosynthesis; biotin from 7,8-diaminononanoate: step 2/2. Its function is as follows. Catalyzes the conversion of dethiobiotin (DTB) to biotin by the insertion of a sulfur atom into dethiobiotin via a radical-based mechanism. This Lawsonia intracellularis (strain PHE/MN1-00) protein is Biotin synthase.